Here is a 69-residue protein sequence, read N- to C-terminus: Cytochrome c oxidase subunit 8A, mitochondrial (69 aa).

A mitochondrion-targeting transit peptide spans 1–25 (MSSLTPLLLRSLTGPARRLMVPRAQ). The SIFI-degron signature appears at 2 to 19 (SSLTPLLLRSLTGPARRL). Topologically, residues 26–36 (VHSKPPREQLG) are mitochondrial matrix. Residues 37–60 (VLDITIGLTSCFVCCLLPAGWVLS) traverse the membrane as a helical segment. Over 61–69 (HLESYKKRE) the chain is Mitochondrial intermembrane.

This sequence belongs to the cytochrome c oxidase VIII family. Component of the cytochrome c oxidase (complex IV, CIV), a multisubunit enzyme composed of 14 subunits. The complex is composed of a catalytic core of 3 subunits MT-CO1, MT-CO2 and MT-CO3, encoded in the mitochondrial DNA, and 11 supernumerary subunits COX4I, COX5A, COX5B, COX6A, COX6B, COX6C, COX7A, COX7B, COX7C, COX8 and NDUFA4, which are encoded in the nuclear genome. The complex exists as a monomer or a dimer and forms supercomplexes (SCs) in the inner mitochondrial membrane with NADH-ubiquinone oxidoreductase (complex I, CI) and ubiquinol-cytochrome c oxidoreductase (cytochrome b-c1 complex, complex III, CIII), resulting in different assemblies (supercomplex SCI(1)III(2)IV(1) and megacomplex MCI(2)III(2)IV(2)). In terms of processing, in response to mitochondrial stress, the precursor protein is ubiquitinated by the SIFI complex in the cytoplasm before mitochondrial import, leading to its degradation. Within the SIFI complex, UBR4 initiates ubiquitin chain that are further elongated or branched by KCMF1.

It is found in the mitochondrion inner membrane. Its pathway is energy metabolism; oxidative phosphorylation. Component of the cytochrome c oxidase, the last enzyme in the mitochondrial electron transport chain which drives oxidative phosphorylation. The respiratory chain contains 3 multisubunit complexes succinate dehydrogenase (complex II, CII), ubiquinol-cytochrome c oxidoreductase (cytochrome b-c1 complex, complex III, CIII) and cytochrome c oxidase (complex IV, CIV), that cooperate to transfer electrons derived from NADH and succinate to molecular oxygen, creating an electrochemical gradient over the inner membrane that drives transmembrane transport and the ATP synthase. Cytochrome c oxidase is the component of the respiratory chain that catalyzes the reduction of oxygen to water. Electrons originating from reduced cytochrome c in the intermembrane space (IMS) are transferred via the dinuclear copper A center (CU(A)) of subunit 2 and heme A of subunit 1 to the active site in subunit 1, a binuclear center (BNC) formed by heme A3 and copper B (CU(B)). The BNC reduces molecular oxygen to 2 water molecules using 4 electrons from cytochrome c in the IMS and 4 protons from the mitochondrial matrix. This chain is Cytochrome c oxidase subunit 8A, mitochondrial (Cox8a), found in Rattus norvegicus (Rat).